The chain runs to 228 residues: MIISTGNDDLDRRLGGIPYPASIMIEGDHGTGKSVLSAQFVLGFLLSDKKGYVITTEQTTKDYLIKMKEIKIDLIPYFIRGKLRIAPLNTKKFNWNSSLAEKILDVIVNFIRSKNIDFIVIDSLSILAAFSKEKQLLQFMKDIRVLVNTGKMILFTIHPDTFDEEMKSKITSIVDVYLKLSAATIGGRRVKILERVKTTGGISGSDTISFDVDPALGIKVVPLSLSRA.

7 residues coordinate ATP: Gly-30, Thr-31, Lys-33, Ser-34, Val-35, Glu-57, and Lys-191. Position 34 (Ser-34) interacts with Mg(2+). Glu-57 contributes to the Mg(2+) binding site.

It belongs to the FlaH family. The S.acidocaldarius archaellum assembly machinery and its filament consist of seven proteins (FlaB, FlaF, FlaG, FlaH, FlaI, FlaJ and FlaX). Interacts directly with the FlaX ring and the motor ATPase FlaI. Monomers, which can probably form homohexamers upon binding to ATP. In vitro, FlaH assembles as a second ring inside the FlaX ring.

It is found in the archaeal flagellum. Its subcellular location is the cytoplasm. In terms of biological role, component of the archaellum. FlaX, FlaH and FlaI form the core cytoplasmic motor complex of the crenarchaeal archaellum. FlaH binds ATP with high affinity but lacks detectable in vitro ATPase activity. ATP binding is essential for interaction with FlaI and for archaellum assembly. The sequence is that of Archaeal flagellar ATP-binding protein FlaH from Sulfolobus acidocaldarius (strain ATCC 33909 / DSM 639 / JCM 8929 / NBRC 15157 / NCIMB 11770).